Consider the following 838-residue polypeptide: MVQLDVEKTIEELTLGEKVALTAGIDFWHTAAVPRLNIPSLRMSDGPNGVRGTRFFNGVPAACFPCATALGATWDTKLLYEVGRLMGEESIAKGAHVVLGPTINTQRSPLGGRGFESFAEDGVLSGILAGHYCKGLQETGVAATLKHFVCNDQEHERLAVDSIVTMRAMREIYLLPFQLAMRICKTACVMTAYNKVNGTHVSENKQIITDILRKEWGWDGLVMSDWFGTYSTCDAINAGLDLEMPGPTRWRGTALAHAVSSNKAFEFVMDERVRNILNLHNFVEPLGIPENAPEKALNRPEDQALLRRAAAESVVLIKNQDNILPLKKEKPILVIGPNAKTAAYCGGGSASLDAYYTVTPFEGVAAQSQGEVTFSQGVYSYKELPLLGPLLKTDDGKKGFKFRVYNEPPSEPNRQLIDELHLESSSGFLMDYKHPKIKTFTFYVDMEGYFTPEEDGIYDFGVTVVGTGKLFVDDELVVDNSKNQRQGTAMFGNATVEEKGSKELKAGQTYKVVLQFGTAPTSDLDMRGVVIFGPGGFRFGAARRVSQEELISKAAELASQTSQVVIFAGLTSEWETEGYDRDHMDLPPGSDEMISRVLDANPDTVVVIQSGTPVTMPWAHKAKALLQAWFGGNECGNGIADVLYGNVNPAAKLPLSFPVRLQDNPSYLNFRSERGRVLYGEDIYVGYRYYEKVDLAPLFPFGHGLSYTTFSRSDLSLATTPEKPQLEDGEPITVTVSVTNTGSVAGAEIVQLWVAPPPTGVNRPVRELKGFTKVFLQPGETKKVEIVVEKKLATSWWDEQREKWASEKGTYEVLVTGTGDEVLKSSFEVEKTRYWLGL.

N-linked (GlcNAc...) asparagine glycosylation occurs at Asn197. Asp225 is a catalytic residue. Residues 395–555 (DGKKGFKFRV…SQEELISKAA (161 aa)) enclose the PA14 domain. Asn493 is a glycosylation site (N-linked (GlcNAc...) asparagine).

This sequence belongs to the glycosyl hydrolase 3 family.

The protein localises to the secreted. The enzyme catalyses Hydrolysis of terminal, non-reducing beta-D-glucosyl residues with release of beta-D-glucose.. Its pathway is glycan metabolism; cellulose degradation. Functionally, beta-glucosidases are one of a number of cellulolytic enzymes involved in the degradation of cellulosic biomass. Catalyzes the last step releasing glucose from the inhibitory cellobiose. In Aspergillus fumigatus (strain ATCC MYA-4609 / CBS 101355 / FGSC A1100 / Af293) (Neosartorya fumigata), this protein is Probable beta-glucosidase I (bglI).